A 176-amino-acid chain; its full sequence is Dual specificity phosphatase 28 (176 aa).

The 143-residue stretch at 17-159 (PPLVRVAPSL…LQKYEEALQA (143 aa)) folds into the Tyrosine-protein phosphatase domain. Catalysis depends on C103, which acts as the Phosphocysteine intermediate.

It belongs to the protein-tyrosine phosphatase family. Non-receptor class dual specificity subfamily. In terms of assembly, monomer.

It carries out the reaction O-phospho-L-tyrosyl-[protein] + H2O = L-tyrosyl-[protein] + phosphate. It catalyses the reaction O-phospho-L-seryl-[protein] + H2O = L-seryl-[protein] + phosphate. The enzyme catalyses O-phospho-L-threonyl-[protein] + H2O = L-threonyl-[protein] + phosphate. Functionally, has phosphatase activity with the synthetic substrate 6,8-difluoro-4-methylumbelliferyl phosphate (in vitro). Has almost no detectable activity with phosphotyrosine, even less activity with phosphothreonine and displays complete lack of activity with phosphoserine. The poor activity with phosphotyrosine may be due to steric hindrance by bulky amino acid sidechains that obstruct access to the active site. The polypeptide is Dual specificity phosphatase 28 (DUSP28) (Homo sapiens (Human)).